We begin with the raw amino-acid sequence, 482 residues long: U2 small nuclear ribonucleoprotein auxiliary factor 35 kDa subunit-related protein 2 (482 aa).

The disordered stretch occupies residues 1 to 59 (MAAPEKMTFPEKPSHKKYRAALKKEKRKKRRQELARLRDSGLSQKEEEEDTFIEEQQLE). Basic residues predominate over residues 14 to 31 (SHKKYRAALKKEKRKKRR). A Glycyl lysine isopeptide (Lys-Gly) (interchain with G-Cter in SUMO2) cross-link involves residue Lys45. Over residues 46–58 (EEEEDTFIEEQQL) the composition is skewed to acidic residues. Residue Lys62 forms a Glycyl lysine isopeptide (Lys-Gly) (interchain with G-Cter in SUMO2) linkage. Residues 115–135 (QRKEREEEEQKRQEKKEKEEA) form a disordered region. Residues 166–194 (EKDRANCPFYSKTGACRFGDRCSRKHNFP) form a C3H1-type 1 zinc finger. Residues 198–304 (PTLLIKSMFT…RQLQCEFCPV (107 aa)) form the RRM domain. Residues 306 to 333 (RWKMAICGLFEIQQCPRGKHCNFLHVFR) form a C3H1-type 2 zinc finger. Ser349 bears the Phosphoserine mark. Positions 351-482 (DRTGSSFGKN…DRTVQSPKSK (132 aa)) are disordered. 2 stretches are compositionally biased toward basic and acidic residues: residues 360–375 (NSERRERMGHHDDYYS) and 383–398 (PSPDHSYKRNGESERK). Ser384 bears the Phosphoserine mark. Basic residues predominate over residues 399 to 412 (SSRHRGKKSHKRTS). A compositionally biased stretch (basic and acidic residues) spans 413-435 (KSRERHNSRSRGRNRDRSRDRSR). Residues 436–454 (GRGSRSRSRSRSRRSRRSR) are compositionally biased toward basic residues.

Component of the U11/U12 snRNPs that are part of the U12-type spliceosome. Interacts (via RS domain) with SRSF1 and SRSF2. Interacts with U2AF2/U2AF65. Phosphorylated in the RS domain by SRPK1. As to expression, widely expressed.

It is found in the nucleus. Functionally, pre-mRNA-binding protein required for splicing of both U2- and U12-type introns. Selectively interacts with the 3'-splice site of U2- and U12-type pre-mRNAs and promotes different steps in U2 and U12 intron splicing. Recruited to U12 pre-mRNAs in an ATP-dependent manner and is required for assembly of the pre-spliceosome, a precursor to other spliceosomal complexes. For U2-type introns, it is selectively and specifically required for the second step of splicing. This is U2 small nuclear ribonucleoprotein auxiliary factor 35 kDa subunit-related protein 2 (ZRSR2) from Homo sapiens (Human).